We begin with the raw amino-acid sequence, 82 residues long: Endocuticle structural glycoprotein SgAbd-5 (82 aa).

A Pyrrolidone carboxylic acid modification is found at Gln-1. A Chitin-binding type R&amp;R domain is found at 18-82 (LGQYNFAYRT…ENGYQPRVQS (65 aa)).

Functionally, component of the soft endocuticle of desert locust. The polypeptide is Endocuticle structural glycoprotein SgAbd-5 (Schistocerca gregaria (Desert locust)).